We begin with the raw amino-acid sequence, 579 residues long: Insulin-like growth factor 2 mRNA-binding protein 3 (579 aa).

RRM domains are found at residues 2-75 and 81-156; these read NKLY…HSVP and RKLQ…YIPD. The interval 158–192 is disordered; the sequence is TAAQQNPSPQLRGRRGPGQRGSSRQASPGSVSKQK. The residue at position 165 (Ser165) is a Phosphoserine. Position 184 is a phosphoserine; by MTOR (Ser184). KH domains lie at 195 to 260, 276 to 343, and 405 to 470; these read DLPL…CKSI, EIPL…EEEI, and TETV…QGRI. Glycyl lysine isopeptide (Lys-Gly) (interchain with G-Cter in SUMO2) cross-links involve residues Lys450 and Lys475. The region spanning 487-553 is the KH 4 domain; the sequence is KLEAHIRVPS…YACQVAQRKI (67 aa). The residue at position 528 (Thr528) is a Phosphothreonine.

It belongs to the RRM IMP/VICKZ family. In terms of assembly, can form homooligomers and heterooligomers with IGF2BP1 and IGF2BP3 in an RNA-dependent manner. Interacts with IGF2BP1. Interacts with ELAVL1, DHX9, HNRNPU, MATR3 and PABPC1. As to expression, expressed in oocytes, spermatogonia and spermatocytes (at protein level).

The protein resides in the nucleus. It is found in the cytoplasm. It localises to the P-body. The protein localises to the stress granule. Functionally, RNA-binding factor that may recruit target transcripts to cytoplasmic protein-RNA complexes (mRNPs). This transcript 'caging' into mRNPs allows mRNA transport and transient storage. It also modulates the rate and location at which target transcripts encounter the translational apparatus and shields them from endonuclease attacks or microRNA-mediated degradation. Preferentially binds to N6-methyladenosine (m6A)-containing mRNAs and increases their stability. Binds to the 3'-UTR of CD44 mRNA and stabilizes it, hence promotes cell adhesion and invadopodia formation. Binds to beta-actin/ACTB and MYC transcripts. Increases MYC mRNA stability by binding to the coding region instability determinant (CRD) and binding is enhanced by m6A-modification of the CRD. Binds to the 5'-UTR of the insulin-like growth factor 2 (IGF2) mRNAs. This is Insulin-like growth factor 2 mRNA-binding protein 3 (Igf2bp3) from Mus musculus (Mouse).